The sequence spans 807 residues: Spondin-1 (807 aa).

The N-terminal stretch at 1–28 (MRLSPVLLRLSRGPALLALALPLAVALA) is a signal peptide. Residues 29-194 (FSDETLDKVP…DSTFDGVTDK (166 aa)) form the Reelin domain. 17 disulfide bridges follow: Cys44/Cys128, Cys156/Cys182, Cys199/Cys336, Cys200/Cys340, Cys202/Cys415, Cys443/Cys480, Cys454/Cys489, Cys459/Cys494, Cys502/Cys538, Cys513/Cys517, Cys548/Cys554, Cys559/Cys595, Cys570/Cys574, Cys605/Cys610, Cys615/Cys650, Cys626/Cys630, and Cys660/Cys665. One can recognise a Spondin domain in the interval 195-388 (PILDCCACGT…LTSLDHPQSP (194 aa)). Asn214 is a glycosylation site (N-linked (GlcNAc...) asparagine). Ca(2+) contacts are provided by Asp325, Asp354, and Asp358. TSP type-1 domains are found at residues 442 to 495 (TCIY…PGCS), 501 to 555 (TCTM…EECS), 558 to 611 (SCLT…PECH), 614 to 666 (PCLL…PECP), 668 to 721 (DCEL…RKCL), and 754 to 806 (GCRM…NVHP). N-linked (GlcNAc...) asparagine glycosylation occurs at Asn681.

In terms of assembly, binds to the central extracellular domain of APP and inhibits beta-secretase cleavage of APP.

Its subcellular location is the secreted. The protein localises to the extracellular space. It localises to the extracellular matrix. Functionally, cell adhesion protein that promotes the attachment of spinal cord and sensory neuron cells and the outgrowth of neurites in vitro. May contribute to the growth and guidance of axons in both the spinal cord and the PNS. Major factor for vascular smooth muscle cell. The protein is Spondin-1 (SPON1) of Bos taurus (Bovine).